The primary structure comprises 387 residues: Chaperone protein DnaJ (387 aa).

The J domain maps to Asp-5–Gly-70. The CR-type zinc finger occupies Gly-140–Glu-218. 8 residues coordinate Zn(2+): Cys-153, Cys-156, Cys-170, Cys-173, Cys-192, Cys-195, Cys-206, and Cys-209. CXXCXGXG motif repeat units lie at residues Cys-153–Gly-160, Cys-170–Gly-177, Cys-192–Gly-199, and Cys-206–Gly-213.

The protein belongs to the DnaJ family. In terms of assembly, homodimer. It depends on Zn(2+) as a cofactor.

The protein localises to the cytoplasm. Functionally, participates actively in the response to hyperosmotic and heat shock by preventing the aggregation of stress-denatured proteins and by disaggregating proteins, also in an autonomous, DnaK-independent fashion. Unfolded proteins bind initially to DnaJ; upon interaction with the DnaJ-bound protein, DnaK hydrolyzes its bound ATP, resulting in the formation of a stable complex. GrpE releases ADP from DnaK; ATP binding to DnaK triggers the release of the substrate protein, thus completing the reaction cycle. Several rounds of ATP-dependent interactions between DnaJ, DnaK and GrpE are required for fully efficient folding. Also involved, together with DnaK and GrpE, in the DNA replication of plasmids through activation of initiation proteins. In Methylobacterium sp. (strain 4-46), this protein is Chaperone protein DnaJ.